Consider the following 781-residue polypeptide: Serine/threonine-protein kinase PLK4 (781 aa).

Positions 14-268 (YEVQHLLGKG…LEQVLRHPFM (255 aa)) constitute a Protein kinase domain. ATP is bound by residues 20–28 (LGKGGFACV) and Lys43. Catalysis depends on Asp139, which acts as the Proton acceptor. The Cryptic POLO box 1 (CPB1) domain maps to 397 to 514 (TEHISVPPLN…ARFVGLVKSK (118 aa)). The interval 463-486 (QPDPGRGLPIQEQTSETHSSGTDN) is disordered. Polar residues predominate over residues 473–486 (QEQTSETHSSGTDN). Positions 515–618 (TPKVTYFSAL…GRRPVVEVLP (104 aa)) constitute a Cryptic POLO box 2 (CPB2) domain. A POLO box domain is found at 672 to 751 (PIKRLNVPGV…LPQVQMKLRC (80 aa)).

This sequence belongs to the protein kinase superfamily. Ser/Thr protein kinase family. CDC5/Polo subfamily. As to quaternary structure, homodimer. Ubiquitinated by the SCF(Slimb) ubiquitin ligase complex; leading to its degradation by the proteasome during interphase and regulating centriole number and ensuring the block to centriole reduplication.

The protein resides in the cytoplasm. Its subcellular location is the cytoskeleton. The protein localises to the microtubule organizing center. It localises to the centrosome. It is found in the centriole. It carries out the reaction L-seryl-[protein] + ATP = O-phospho-L-seryl-[protein] + ADP + H(+). The catalysed reaction is L-threonyl-[protein] + ATP = O-phospho-L-threonyl-[protein] + ADP + H(+). Its function is as follows. Serine/threonine-protein kinase that plays a central role in centriole duplication. Able to trigger procentriole formation on the surface of the mother centriole cylinder, using mother centriole as a platform, leading to the recruitment of centriole biogenesis proteins such as sas-6. When overexpressed, it is able to induce centrosome amplification through the simultaneous generation of multiple procentrioles adjoining each parental centriole during S phase. Centrosome amplification following overexpression can initiate tumorigenesis, highlighting the importance of centrosome regulation in cancers. This chain is Serine/threonine-protein kinase PLK4 (SAK), found in Drosophila virilis (Fruit fly).